Reading from the N-terminus, the 146-residue chain is 16.0 kDa heat shock protein, peroxisomal (146 aa).

In terms of domain architecture, sHSP spans 23-143; sequence WASASATAAM…RPRTRPIAVS (121 aa). Residues 144–146 carry the Microbody targeting signal motif; the sequence is SKL.

The protein belongs to the small heat shock protein (HSP20) family. As to quaternary structure, may form oligomeric structures.

The protein resides in the peroxisome. The chain is 16.0 kDa heat shock protein, peroxisomal (HSP16.0) from Oryza sativa subsp. japonica (Rice).